The primary structure comprises 790 residues: Chorion peroxidase (790 aa).

An N-terminal signal peptide occupies residues 1–16 (MAKKVLLLSLYSAVLS). Residues 17–209 (TWFGFGYVQC…ARIPRAIRKR (193 aa)) constitute a propeptide that is removed on maturation. Cys210 carries the N-acetylcysteine; in Chorion peroxidase light chain modification. Cys216 and Cys229 are disulfide-bonded. Trp259 carries an N-linked (Man) tryptophan glycan. Residue His305 is the Proton acceptor of the active site. A glycan (N-linked (GlcNAc...) asparagine) is linked at Asn327. At Tyr353 the chain carries 3',4'-dihydroxyphenylalanine. An intrachain disulfide couples Cys433 to Cys440. The N-linked (Man) tryptophan glycan is linked to Trp479. His551 contributes to the heme b binding site. Residue Trp680 is glycosylated (N-linked (Man) tryptophan). Cys746 and Cys774 form a disulfide bridge. Trp785 carries an N-linked (Man) tryptophan glycan.

The protein belongs to the peroxidase family. XPO subfamily. As to quaternary structure, heterodimer. It depends on heme b as a cofactor. N-glycosylated on Trp by mannose and on Asn by N-acetylglucosamine. Post-translationally, there is a hexose glycosylation of an unidentified residue between 654 and 708; Trp-680 is conserved in closely related species and is probably mannosylated.

The protein localises to the secreted. The enzyme catalyses 2 a phenolic donor + H2O2 = 2 a phenolic radical donor + 2 H2O. Its activity is regulated as follows. Extremely resistant to denaturating agents, such as SDS and organic solvents. Its function is as follows. Involved in the formation of a rigid and insoluble egg chorion by catalyzing chorion protein cross-linking through dityrosine formation and phenol oxidase-catalyzed chorion melanization. This Aedes aegypti (Yellowfever mosquito) protein is Chorion peroxidase (pxt).